The following is a 127-amino-acid chain: Ribonuclease P protein component (127 aa).

This sequence belongs to the RnpA family. In terms of assembly, consists of a catalytic RNA component (M1 or rnpB) and a protein subunit.

The catalysed reaction is Endonucleolytic cleavage of RNA, removing 5'-extranucleotides from tRNA precursor.. Its function is as follows. RNaseP catalyzes the removal of the 5'-leader sequence from pre-tRNA to produce the mature 5'-terminus. It can also cleave other RNA substrates such as 4.5S RNA. The protein component plays an auxiliary but essential role in vivo by binding to the 5'-leader sequence and broadening the substrate specificity of the ribozyme. This is Ribonuclease P protein component from Agrobacterium fabrum (strain C58 / ATCC 33970) (Agrobacterium tumefaciens (strain C58)).